The chain runs to 117 residues: Large ribosomal subunit protein bL19 (117 aa).

Belongs to the bacterial ribosomal protein bL19 family.

Functionally, this protein is located at the 30S-50S ribosomal subunit interface and may play a role in the structure and function of the aminoacyl-tRNA binding site. This is Large ribosomal subunit protein bL19 from Alkalilimnicola ehrlichii (strain ATCC BAA-1101 / DSM 17681 / MLHE-1).